Reading from the N-terminus, the 86-residue chain is Weak neurotoxin 9 (86 aa).

The signal sequence occupies residues 1-21; that stretch reads MKTLLLTLVVVTIVCLDLGYT. Intrachain disulfides connect Cys24–Cys45, Cys27–Cys32, Cys38–Cys63, Cys67–Cys78, and Cys79–Cys84.

This sequence belongs to the three-finger toxin family. Ancestral subfamily. Orphan group II sub-subfamily. In terms of tissue distribution, expressed by the venom gland.

Its subcellular location is the secreted. In terms of biological role, binds with low affinity to muscular (alpha-1-beta-1-delta-epsilon/CHRNA1-CHRNB1-CHRND-CHRNE) and very low affinity to neuronal (alpha-7/CHRNA7) nicotinic acetylcholine receptor (nAChR). The polypeptide is Weak neurotoxin 9 (Naja sputatrix (Malayan spitting cobra)).